We begin with the raw amino-acid sequence, 555 residues long: Cinnamate beta-D-glucosyltransferase (555 aa).

The Proton acceptor role is filled by His19. An an anthocyanidin-binding site is contributed by His19. The UDP-alpha-D-glucose site is built by Gln344, His359, Trp362, Asn363, Ser364, and Glu367. Gly382 serves as a coordination point for an anthocyanidin. The UDP-alpha-D-glucose site is built by Asp383 and Gln384.

It belongs to the UDP-glycosyltransferase family. As to expression, highest expression detected in fruit, with lower levels detected in flower and petiole. Barely detectable in leaf and root.

It carries out the reaction (E)-cinnamate + UDP-alpha-D-glucose = 1-O-(trans-cinnamoyl)-beta-D-glucose + UDP. Broad spectrum multifunctional glucosyltransferase. Catalyzes the formation of cinnamic acid and p-coumaric acid glucose esters during fruit ripening. Accepted substrates range from derivatives of cinnamic acid and benzoic acid to heterocyclic and aliphatic compounds, resulting in the formation of O- and S-glucose esters and O-glucosides. May also be involved in detoxification of xenobiotics. This Fragaria ananassa (Strawberry) protein is Cinnamate beta-D-glucosyltransferase.